The chain runs to 145 residues: 3-hydroxyacyl-[acyl-carrier-protein] dehydratase FabZ (145 aa).

His49 is an active-site residue.

It belongs to the thioester dehydratase family. FabZ subfamily.

The protein localises to the cytoplasm. It catalyses the reaction a (3R)-hydroxyacyl-[ACP] = a (2E)-enoyl-[ACP] + H2O. Its function is as follows. Involved in unsaturated fatty acids biosynthesis. Catalyzes the dehydration of short chain beta-hydroxyacyl-ACPs and long chain saturated and unsaturated beta-hydroxyacyl-ACPs. This chain is 3-hydroxyacyl-[acyl-carrier-protein] dehydratase FabZ, found in Anaplasma phagocytophilum (strain HZ).